The following is a 621-amino-acid chain: Solute carrier family 2, facilitated glucose transporter member 12 (621 aa).

Residues 1–48 (MVPVENTEGPNLLNQKGTAVETEGSYRASGSRHPPWARGCGMFTFLSS) are Cytoplasmic-facing. Residues 49–69 (VTAAVSGLLVGYELGIISGAL) traverse the membrane as a helical segment. The Extracellular segment spans residues 70–84 (LQIKTLLTLSCHEQE). Residues 85–105 (MVVSSLLIGALLASLTGGVLI) form a helical membrane-spanning segment. Over 106–119 (DRYGRRTAIILSSC) the chain is Cytoplasmic. The helical transmembrane segment at 120 to 140 (LLGLGSLVLILSLSYTVLIVG) threads the bilayer. Residue arginine 141 is a topological domain, extracellular. The helical transmembrane segment at 142 to 162 (IAIGVSISLSSIATCVYIAEI) threads the bilayer. The Cytoplasmic segment spans residues 163-176 (APQHRRGLLVSLNE). Residues 177 to 197 (LMIVIGILSAYISNYAFANVF) form a helical membrane-spanning segment. Topologically, residues 198-201 (HGWK) are extracellular. The chain crosses the membrane as a helical span at residues 202 to 222 (YMFGLVIPLGILQAIAMYFLP). At 223 to 282 (PSPRFLVMKGQEGAASKVLGRLRALSDATEELTVIKSSLKDEYQYSFWDLFRSKDNMRTR) the chain is on the cytoplasmic side. Residues 283-303 (IMIGLTLVFFVQITGQPNILF) form a helical membrane-spanning segment. Residues 304–321 (YASTVLKSVGFQSNEAAS) lie on the Extracellular side of the membrane. A helical transmembrane segment spans residues 322–342 (LASTGVGVVKVISTIPATLLV). At 343-349 (DHVGSKT) the chain is on the cytoplasmic side. The helical transmembrane segment at 350–370 (FLCIGSSVMAASLVTMGIVNL) threads the bilayer. Residues 371–470 (NIHMNFTNIC…PAFLKWLSLA (100 aa)) lie on the Extracellular side of the membrane. Residues asparagine 375, asparagine 387, asparagine 400, and asparagine 405 are each glycosylated (N-linked (GlcNAc...) asparagine). A helical membrane pass occupies residues 471–491 (SLLVYVAAFSIGLGPMPWLVL). Topologically, residues 492 to 502 (SEIFPGGIRGR) are cytoplasmic. A helical membrane pass occupies residues 503 to 523 (AMALTSSMNWGINLLISLTFL). Residues 524 to 532 (TVTDLIGLP) are Extracellular-facing. The chain crosses the membrane as a helical span at residues 533 to 553 (WVCFIYTIMSLASLLFVVMFI). Residues 554 to 621 (PETKGCSLEQ…GQSRQLSPEN (68 aa)) lie on the Cytoplasmic side of the membrane.

It belongs to the major facilitator superfamily. Sugar transporter (TC 2.A.1.1) family. Glucose transporter subfamily.

The protein resides in the cell membrane. It localises to the endomembrane system. It is found in the cytoplasm. The protein localises to the perinuclear region. The catalysed reaction is D-glucose(out) = D-glucose(in). Functionally, insulin-independent facilitative glucose transporter. The protein is Solute carrier family 2, facilitated glucose transporter member 12 of Macaca fascicularis (Crab-eating macaque).